The following is a 182-amino-acid chain: CKLF-like MARVEL transmembrane domain-containing protein 3 (182 aa).

Residues 1 to 12 (MWPPDPDPDPDP) are compositionally biased toward acidic residues. Residues 1-21 (MWPPDPDPDPDPEPAGGSRPG) form a disordered region. One can recognise an MARVEL domain in the interval 36–155 (FLCSLKGRLL…DFYLIFNDVA (120 aa)). 3 helical membrane passes run 64–84 (ASAF…FLFA), 101–121 (MDFL…ITAI), and 131–151 (AAGV…YLIF).

It belongs to the chemokine-like factor family. In terms of tissue distribution, expressed in the leukocytes, placenta and testis.

The protein localises to the membrane. This Homo sapiens (Human) protein is CKLF-like MARVEL transmembrane domain-containing protein 3 (CMTM3).